The following is a 233-amino-acid chain: UPF0502 protein YpsIP31758_2048 (233 aa).

The protein belongs to the UPF0502 family.

In Yersinia pseudotuberculosis serotype O:1b (strain IP 31758), this protein is UPF0502 protein YpsIP31758_2048.